Reading from the N-terminus, the 149-residue chain is Transcriptional repressor NrdR (149 aa).

A zinc finger lies at 3–34 (CPFCFAVDTKVIDSRLVGEGSSVRRRRQCLVC). The ATP-cone domain maps to 49 to 139 (PRVVKSNDVR…VYRSFEDIKE (91 aa)).

The protein belongs to the NrdR family. It depends on Zn(2+) as a cofactor.

Functionally, negatively regulates transcription of bacterial ribonucleotide reductase nrd genes and operons by binding to NrdR-boxes. The protein is Transcriptional repressor NrdR of Klebsiella pneumoniae (strain 342).